Here is a 565-residue protein sequence, read N- to C-terminus: MSSAGIATLSPLLDQFCFAPHGEPRLQQLDSIVIFLAMPGVAPMPMRVLHSDSVASVKLRIQQFKGFVTTKQRLVFSGHELSLNNSHVRDYGLTDGNVLHLVVRLADLRAISIETANGKKFQFQVESCCNVGYLKDKLSAESGQQLGSLKDQRLVFDGEELEDNQLIADISKKGAAVIHLFIRRPAKVQTQQGDKETVVTVVTPKDNDNLQTDALNLAKPAKGKPAPVEPIIANGKVKLSPAVMEMIYSTISGIENGYLPVMSTEGSGGVYFMKDSSGESNVAVFKPIDEEPMAKNNPRGLPLSTDGEGLKRGTRVGEGALREVAAYILDHPVYGCKSCDVPGFSGVPPTALVRCFHMGKGSNKVGSLQLFVDNNGSCEDMGPRAFPVKEVQKIAILDIRLANADRHAGNILVCQDGEDHLKLIPIDHGYCLPEKFEDCTFEWLYWPQAREPFGPETAAYIGSLDADKDIALLKFHGWALSPQCARVLRISTMLLKKGAERGLTPYDIGSILCRQTVKKESEIEAIIEEAEDAILPGTSEETFLETISEIMDFHLDKLAVKLKKF.

2 consecutive Ubiquitin-like domains span residues 32–104 and 109–187; these read IVIF…LVVR and RAIS…RPAK. The PI3K/PI4K catalytic domain maps to 257-542; the sequence is GYLPVMSTEG…AILPGTSEET (286 aa). Positions 263 to 269 are G-loop; the sequence is STEGSGG. Residues 264-270 and lysine 286 each bind ATP; that span reads TEGSGGV. A disordered region spans residues 291 to 311; sequence EPMAKNNPRGLPLSTDGEGLK. Residue 369–372 coordinates ATP; the sequence is QLFV. A catalytic loop region spans residues 402–410; sequence ANADRHAGN. Residues 425–451 form an activation loop region; the sequence is PIDHGYCLPEKFEDCTFEWLYWPQARE. Aspartate 427 is a binding site for ATP.

This sequence belongs to the PI3/PI4-kinase family. Type II PI4K subfamily. In terms of assembly, interacts with FTIP1 and RPN10. As to expression, specifically expressed in the phloem including companion cells.

The protein localises to the nucleus. It is found in the endoplasmic reticulum. The enzyme catalyses a 1,2-diacyl-sn-glycero-3-phospho-(1D-myo-inositol) + ATP = a 1,2-diacyl-sn-glycero-3-phospho-(1D-myo-inositol 4-phosphate) + ADP + H(+). Functionally, the phosphorylation of phosphatidylinositol (PI) to PI4P is the first committed step in the generation of phosphatidylinositol 4,5-bisphosphate (PIP2), a precursor of the second messenger inositol 1,4,5-trisphosphate (InsP3). Involved in the control of flowering under long day conditions by promoting degradation of FTIP1. Recruits FTIP1 for degradation by the 26S proteasome in leaves, which affects RFT1 transport to the shoot apical meristem (SAM). The sequence is that of Phosphatidylinositol 4-kinase gamma 4 from Oryza sativa subsp. japonica (Rice).